Consider the following 561-residue polypeptide: DNA ligase B (561 aa).

Lys-125 serves as the catalytic N6-AMP-lysine intermediate.

The protein belongs to the NAD-dependent DNA ligase family. LigB subfamily.

It catalyses the reaction NAD(+) + (deoxyribonucleotide)n-3'-hydroxyl + 5'-phospho-(deoxyribonucleotide)m = (deoxyribonucleotide)n+m + AMP + beta-nicotinamide D-nucleotide.. Functionally, catalyzes the formation of phosphodiester linkages between 5'-phosphoryl and 3'-hydroxyl groups in double-stranded DNA using NAD as a coenzyme and as the energy source for the reaction. In Salmonella schwarzengrund (strain CVM19633), this protein is DNA ligase B.